Consider the following 367-residue polypeptide: UDP-N-acetylglucosamine--N-acetylmuramyl-(pentapeptide) pyrophosphoryl-undecaprenol N-acetylglucosamine transferase (367 aa).

Residues Thr-13–Gly-15, Arg-168, Ser-196, Ile-252, and Gln-297 each bind UDP-N-acetyl-alpha-D-glucosamine.

The protein belongs to the glycosyltransferase 28 family. MurG subfamily.

The protein resides in the cell inner membrane. It carries out the reaction di-trans,octa-cis-undecaprenyl diphospho-N-acetyl-alpha-D-muramoyl-L-alanyl-D-glutamyl-meso-2,6-diaminopimeloyl-D-alanyl-D-alanine + UDP-N-acetyl-alpha-D-glucosamine = di-trans,octa-cis-undecaprenyl diphospho-[N-acetyl-alpha-D-glucosaminyl-(1-&gt;4)]-N-acetyl-alpha-D-muramoyl-L-alanyl-D-glutamyl-meso-2,6-diaminopimeloyl-D-alanyl-D-alanine + UDP + H(+). Its pathway is cell wall biogenesis; peptidoglycan biosynthesis. In terms of biological role, cell wall formation. Catalyzes the transfer of a GlcNAc subunit on undecaprenyl-pyrophosphoryl-MurNAc-pentapeptide (lipid intermediate I) to form undecaprenyl-pyrophosphoryl-MurNAc-(pentapeptide)GlcNAc (lipid intermediate II). This Methylibium petroleiphilum (strain ATCC BAA-1232 / LMG 22953 / PM1) protein is UDP-N-acetylglucosamine--N-acetylmuramyl-(pentapeptide) pyrophosphoryl-undecaprenol N-acetylglucosamine transferase.